Consider the following 476-residue polypeptide: Thymidine phosphorylase (476 aa).

Positions 1–11 are enriched in pro residues; that stretch reads MAAPGTPPPLA. A disordered region spans residues 1–26; it reads MAAPGTPPPLAPETAGADSGGGSGEH. Residues Thr6 and Thr475 each carry the phosphothreonine modification.

This sequence belongs to the thymidine/pyrimidine-nucleoside phosphorylase family. Homodimer.

It carries out the reaction thymidine + phosphate = 2-deoxy-alpha-D-ribose 1-phosphate + thymine. It functions in the pathway pyrimidine metabolism; dTMP biosynthesis via salvage pathway; dTMP from thymine: step 1/2. Catalyzes the reversible phosphorolysis of thymidine. The produced molecules are then utilized as carbon and energy sources or in the rescue of pyrimidine bases for nucleotide synthesis. The chain is Thymidine phosphorylase (Tymp) from Rattus norvegicus (Rat).